The primary structure comprises 478 residues: Membrane-bound lytic murein transglycosylase F (478 aa).

Positions 1 to 29 (MFPDSSYLFSMRSLSRFLIAIFGCGALLA) are cleaved as a signal peptide. Positions 30–269 (SCDSFERSVL…RLLDRYYGHI (240 aa)) are non-LT domain. The tract at residues 271-478 (RLHHTDVNGI…RKEDDSWQEF (208 aa)) is LT domain. The active site involves Glu316.

The protein in the N-terminal section; belongs to the bacterial solute-binding protein 3 family. It in the C-terminal section; belongs to the transglycosylase Slt family.

It localises to the cell outer membrane. It catalyses the reaction Exolytic cleavage of the (1-&gt;4)-beta-glycosidic linkage between N-acetylmuramic acid (MurNAc) and N-acetylglucosamine (GlcNAc) residues in peptidoglycan, from either the reducing or the non-reducing ends of the peptidoglycan chains, with concomitant formation of a 1,6-anhydrobond in the MurNAc residue.. In terms of biological role, murein-degrading enzyme that degrades murein glycan strands and insoluble, high-molecular weight murein sacculi, with the concomitant formation of a 1,6-anhydromuramoyl product. Lytic transglycosylases (LTs) play an integral role in the metabolism of the peptidoglycan (PG) sacculus. Their lytic action creates space within the PG sacculus to allow for its expansion as well as for the insertion of various structures such as secretion systems and flagella. This Nitrosospira multiformis (strain ATCC 25196 / NCIMB 11849 / C 71) protein is Membrane-bound lytic murein transglycosylase F.